Reading from the N-terminus, the 92-residue chain is Small ribosomal subunit protein bS21A (92 aa).

Basic and acidic residues predominate over residues 25–52 (GVFREMKQRRSYEKPSERKTREKSEAIR). Positions 25-92 (GVFREMKQRR…LPQTAARPAG (68 aa)) are disordered.

It belongs to the bacterial ribosomal protein bS21 family.

The sequence is that of Small ribosomal subunit protein bS21A from Bradyrhizobium diazoefficiens (strain JCM 10833 / BCRC 13528 / IAM 13628 / NBRC 14792 / USDA 110).